The following is a 367-amino-acid chain: GPN-loop GTPase 1 (367 aa).

Residues 15–22 (GMAGSGKT) and 18–23 (GSGKTT) contribute to the GTP site. A Gly-Pro-Asn (GPN)-loop; involved in dimer interface motif is present at residues 75–77 (GPN). 178 to 181 (NKCD) contacts GTP. Residues 247–290 (EGMDDFLEAVKAKVKEYEEEYVPEMERMKEIQRQTKERQKEAQL) are a coiled coil. A disordered region spans residues 306–332 (VGLTVSDAEDEYNGELVDPDEDDGLTA). Ser-311 carries the phosphoserine modification. The span at 312–332 (DAEDEYNGELVDPDEDDGLTA) shows a compositional bias: acidic residues.

It belongs to the GPN-loop GTPase family. Heterodimers with gpn2 or fet5/gpn3. Binds to RNA polymerase II (RNAPII).

The protein resides in the cytoplasm. In terms of biological role, small GTPase required for proper nuclear import of RNA polymerase II (RNAPII). May act at an RNAP assembly step prior to nuclear import. The chain is GPN-loop GTPase 1 from Schizosaccharomyces pombe (strain 972 / ATCC 24843) (Fission yeast).